We begin with the raw amino-acid sequence, 583 residues long: ATP-dependent lipid A-core flippase (583 aa).

The next 7 helical transmembrane spans lie at 18–38 (LWPIINPFKIGLIIASITLII), 65–85 (IFMWMPLVLMGLMIMRGMSGF), 105–127 (LLFNHIMNMPVSFFIEQSTATLM), 143–163 (GALITIIREGASVVGLCIMMF), 167–187 (WQLSLVLILIMPIISIIIKLV), 252–272 (VFEPLIQFVASLALACVLYIA), and 277–297 (VIEMLSAGTITVIFSSMIALM). The ABC transmembrane type-1 domain maps to 30-312 (IIASITLIIN…LTNVSAQFQR (283 aa)). Positions 344–580 (IIFDNVTFFY…KGVYSQLYKF (237 aa)) constitute an ABC transporter domain. Residue 378–385 (GRSGSGKS) coordinates ATP.

Belongs to the ABC transporter superfamily. Lipid exporter (TC 3.A.1.106) family. As to quaternary structure, homodimer.

Its subcellular location is the cell inner membrane. It carries out the reaction ATP + H2O + lipid A-core oligosaccharideSide 1 = ADP + phosphate + lipid A-core oligosaccharideSide 2.. Its function is as follows. Involved in lipopolysaccharide (LPS) biosynthesis. Translocates lipid A-core from the inner to the outer leaflet of the inner membrane. Transmembrane domains (TMD) form a pore in the inner membrane and the ATP-binding domain (NBD) is responsible for energy generation. The polypeptide is ATP-dependent lipid A-core flippase (Blochmanniella floridana).